The sequence spans 902 residues: Proline-rich transmembrane protein 4 (902 aa).

The first 18 residues, 1–18, serve as a signal peptide directing secretion; it reads MAGRSCLELGLFCWVLLA. Disordered stretches follow at residues 72 to 92, 121 to 149, and 281 to 333; these read TETH…EEGD, TPWA…SQPR, and SPSS…LLDD. Polar residues-rich tracts occupy residues 122–136 and 281–302; these read PWAS…SRLS and SPSS…STSG. The next 5 helical transmembrane spans lie at 371–391, 393–413, 432–452, 468–488, and 501–521; these read AGAL…LLPW, CPPG…AGTT, LVWL…LGLA, LAAL…GSAV, and GLHA…SCWG. A Phosphoserine modification is found at Ser-642. 3 disordered regions span residues 701-723, 774-811, and 839-872; these read AGAN…DFRP, AGPS…SLCG, and PPRP…ASEL. Positions 704–717 are enriched in polar residues; sequence NPTQSTASSPSSDC. The segment covering 786–798 has biased composition (pro residues); that stretch reads SPAPPELPSPGAW. Composition is skewed to low complexity over residues 799–811 and 843–854; these read PPGS…SLCG and SESSPSLPASGS.

It is found in the membrane. The protein is Proline-rich transmembrane protein 4 (Prrt4) of Mus musculus (Mouse).